A 310-amino-acid chain; its full sequence is Glycerol-3-phosphate dehydrogenase [NAD(P)+] (310 aa).

NADPH is bound by residues W19, R39, R40, and K87. Sn-glycerol 3-phosphate-binding residues include K87 and G115. An NADPH-binding site is contributed by S119. Residues K170, D223, S233, R234, and N235 each contribute to the sn-glycerol 3-phosphate site. Residue K170 is the Proton acceptor of the active site. R234 contacts NADPH. E260 serves as a coordination point for NADPH.

The protein belongs to the NAD-dependent glycerol-3-phosphate dehydrogenase family.

The protein localises to the cytoplasm. The enzyme catalyses sn-glycerol 3-phosphate + NAD(+) = dihydroxyacetone phosphate + NADH + H(+). The catalysed reaction is sn-glycerol 3-phosphate + NADP(+) = dihydroxyacetone phosphate + NADPH + H(+). It functions in the pathway membrane lipid metabolism; glycerophospholipid metabolism. Catalyzes the reduction of the glycolytic intermediate dihydroxyacetone phosphate (DHAP) to sn-glycerol 3-phosphate (G3P), the key precursor for phospholipid synthesis. The sequence is that of Glycerol-3-phosphate dehydrogenase [NAD(P)+] from Synechococcus sp. (strain JA-3-3Ab) (Cyanobacteria bacterium Yellowstone A-Prime).